A 453-amino-acid chain; its full sequence is Ezy-1 protein (453 aa).

A signal peptide spans 1–28 (MQLSNSLRSARSAAASSGCALASRPVVA). Disordered regions lie at residues 167-187 (SDGG…DADG), 272-307 (TGKA…SSGG), and 412-453 (SAGD…SPNM). Over residues 279–300 (AEGDDGEGEEEGEAQDVGEDAV) the composition is skewed to acidic residues. A compositionally biased stretch (basic and acidic residues) spans 415–425 (DGHEPEPKRPE).

The polypeptide is Ezy-1 protein (Ezy-1) (Chlamydomonas reinhardtii (Chlamydomonas smithii)).